Reading from the N-terminus, the 224-residue chain is Ornithine decarboxylase antizyme (224 aa).

Belongs to the ODC antizyme family. Interacts with ODC and thereby sterically blocks ODC homodimerization.

Its function is as follows. Ornithine decarboxylase (ODC) antizyme protein that negatively regulates ODC activity and intracellular polyamine biosynthesis in response to increased intracellular polyamine levels. Binds to ODC monomers, inhibiting the assembly of the functional ODC homodimer, and targets the monomers for ubiquitin-independent proteolytic destruction by the 26S proteasome. The sequence is that of Ornithine decarboxylase antizyme (spa1) from Schizosaccharomyces octosporus (Fission yeast).